The chain runs to 432 residues: Serine--tRNA ligase (432 aa).

Residue Thr239–Glu241 participates in L-serine binding. Position 270–272 (Arg270–Glu272) interacts with ATP. Residue Glu293 participates in L-serine binding. Glu357–Ser360 provides a ligand contact to ATP. Ser392 serves as a coordination point for L-serine.

This sequence belongs to the class-II aminoacyl-tRNA synthetase family. Type-1 seryl-tRNA synthetase subfamily. As to quaternary structure, homodimer. The tRNA molecule binds across the dimer.

The protein localises to the cytoplasm. It catalyses the reaction tRNA(Ser) + L-serine + ATP = L-seryl-tRNA(Ser) + AMP + diphosphate + H(+). The catalysed reaction is tRNA(Sec) + L-serine + ATP = L-seryl-tRNA(Sec) + AMP + diphosphate + H(+). It functions in the pathway aminoacyl-tRNA biosynthesis; selenocysteinyl-tRNA(Sec) biosynthesis; L-seryl-tRNA(Sec) from L-serine and tRNA(Sec): step 1/1. In terms of biological role, catalyzes the attachment of serine to tRNA(Ser). Is also able to aminoacylate tRNA(Sec) with serine, to form the misacylated tRNA L-seryl-tRNA(Sec), which will be further converted into selenocysteinyl-tRNA(Sec). The sequence is that of Serine--tRNA ligase from Methylibium petroleiphilum (strain ATCC BAA-1232 / LMG 22953 / PM1).